The primary structure comprises 140 residues: Ribonuclease P protein component (140 aa).

The disordered stretch occupies residues 33-54 (RALKPSSAKKSSLDTAAKTQPA).

The protein belongs to the RnpA family. In terms of assembly, consists of a catalytic RNA component (M1 or rnpB) and a protein subunit.

It carries out the reaction Endonucleolytic cleavage of RNA, removing 5'-extranucleotides from tRNA precursor.. RNaseP catalyzes the removal of the 5'-leader sequence from pre-tRNA to produce the mature 5'-terminus. It can also cleave other RNA substrates such as 4.5S RNA. The protein component plays an auxiliary but essential role in vivo by binding to the 5'-leader sequence and broadening the substrate specificity of the ribozyme. In Trichormus variabilis (strain ATCC 29413 / PCC 7937) (Anabaena variabilis), this protein is Ribonuclease P protein component.